A 439-amino-acid chain; its full sequence is Cobyrinate a,c-diamide synthase (439 aa).

Residues 214-235 are disordered; the sequence is ETARAPPEVATTERNTGDSPAD. Positions 237-428 constitute a GATase cobBQ-type domain; it reads RVAVAQDSAF…CHCHGESGAF (192 aa). Cysteine 317 (nucleophile) is an active-site residue.

It belongs to the CobB/CbiA family. Mg(2+) serves as cofactor.

It catalyses the reaction cob(II)yrinate + 2 L-glutamine + 2 ATP + 2 H2O = cob(II)yrinate a,c diamide + 2 L-glutamate + 2 ADP + 2 phosphate + 2 H(+). It participates in cofactor biosynthesis; adenosylcobalamin biosynthesis; cob(II)yrinate a,c-diamide from sirohydrochlorin (anaerobic route): step 10/10. Functionally, catalyzes the ATP-dependent amidation of the two carboxylate groups at positions a and c of cobyrinate, using either L-glutamine or ammonia as the nitrogen source. This Haloarcula marismortui (strain ATCC 43049 / DSM 3752 / JCM 8966 / VKM B-1809) (Halobacterium marismortui) protein is Cobyrinate a,c-diamide synthase.